Reading from the N-terminus, the 163-residue chain is Nucleotide-binding protein SYNPCC7002_A1983 (163 aa).

It belongs to the YajQ family.

Its function is as follows. Nucleotide-binding protein. In Picosynechococcus sp. (strain ATCC 27264 / PCC 7002 / PR-6) (Agmenellum quadruplicatum), this protein is Nucleotide-binding protein SYNPCC7002_A1983.